The chain runs to 562 residues: Zinc finger protein 579 (562 aa).

Pro residues predominate over residues 1–11 (MDPQPPPPAQG). The interval 1 to 43 (MDPQPPPPAQGSPPHRGRGRGRGRGRGRGRGRGRGGAGAPRAP) is disordered. Over residues 15–33 (HRGRGRGRGRGRGRGRGRG) the composition is skewed to basic residues. 3 consecutive C2H2-type zinc fingers follow at residues 44–66 (LPCPTCGRLFRFPYYLSRHRLSH), 72–94 (HACPLCPKAFRRPAHLSRHLRGH), and 100–123 (LRCAACPRTFPEPAQLRRHLAQEH). Arg-92 carries the omega-N-methylarginine modification. The tract at residues 139-203 (TAEPSWGPQD…SESEEAEAGA (65 aa)) is disordered. Ser-194 and Ser-196 each carry phosphoserine. 2 consecutive C2H2-type zinc fingers follow at residues 270 to 292 (HQCSICLKAFARPWSLSRHRLVH) and 298 to 320 (FVCPDCGLAFRLASYLRQHRRVH). Positions 327–379 (APLPAAGKKDDKASGARNSAKGPEGGEGAECGGASEGGEGQNGGDAAPARPPA) are disordered. Residues 349–369 (PEGGEGAECGGASEGGEGQNG) are compositionally biased toward gly residues. C2H2-type zinc fingers lie at residues 384–406 (FWCPECGKGFRRRAHLRQHGVTH), 412–434 (FQCVRCQREFKRLADLARHAQVH), and 441–463 (HPCPRCPRRFSRAYSLLRHQRCH). A disordered region spans residues 477-562 (QAQAPTSPPP…HLRGLGGLAS (86 aa)). Pro residues-rich tracts occupy residues 482–491 (TSPPPPPPPL) and 512–525 (PSPGTPPQSPPAPP). The residue at position 483 (Ser-483) is a Phosphoserine.

Belongs to the krueppel C2H2-type zinc-finger protein family.

The protein localises to the nucleus. May be involved in transcriptional regulation. This is Zinc finger protein 579 (ZNF579) from Homo sapiens (Human).